The following is a 137-amino-acid chain: L-ectoine synthase (137 aa).

The disordered stretch occupies residues 118–137 (VHREDGSYAPADEADDQKPL).

This sequence belongs to the ectoine synthase family.

The catalysed reaction is (2S)-4-acetamido-2-aminobutanoate = L-ectoine + H2O. The protein operates within amine and polyamine biosynthesis; ectoine biosynthesis; L-ectoine from L-aspartate 4-semialdehyde: step 3/3. Seems to require potassium ions for its activity and stability. Slightly inhibited by N-ethylmaleimide. Its function is as follows. Catalyzes the circularization of gamma-N-acetyl-alpha,gamma-diaminobutyric acid (ADABA) to ectoine (1,4,5,6-tetrahydro-2-methyl-4-pyrimidine carboxylic acid), which is an excellent osmoprotectant. Does not act on N-acetylated amino acids like N-alpha-acetyl-L-asparagine,N-alpha-acetyl-L-ornithine, N-alpha-acetyl-L-lysine and N-epsilon-acetyl-L-lysine. The sequence is that of L-ectoine synthase (ectC) from Halomonas elongata (strain ATCC 33173 / DSM 2581 / NBRC 15536 / NCIMB 2198 / 1H9).